Here is a 299-residue protein sequence, read N- to C-terminus: Fibrinogen silencer-binding protein (299 aa).

A Glycyl lysine isopeptide (Lys-Gly) (interchain with G-Cter in SUMO2) cross-link involves residue K94. Residues E189 to P211 form a disordered region. Over residues E192 to S209 the composition is skewed to polar residues.

In terms of assembly, interacts with APBA1 (via PDZ 1 and 2 domains).

The protein resides in the nucleus. Its function is as follows. Transcriptional repressor that down-regulates the expression of the fibrinogen gamma chain. Represses transcription of GSK3B gene promoter via its interaction with APBA1. This Mus musculus (Mouse) protein is Fibrinogen silencer-binding protein (Fsbp).